A 176-amino-acid chain; its full sequence is Acireductone dioxygenase (176 aa).

Residues histidine 91, histidine 93, glutamate 97, and histidine 136 each coordinate Fe(2+). 4 residues coordinate Ni(2+): histidine 91, histidine 93, glutamate 97, and histidine 136.

The protein belongs to the acireductone dioxygenase (ARD) family. As to quaternary structure, monomer. Fe(2+) serves as cofactor. Ni(2+) is required as a cofactor.

It catalyses the reaction 1,2-dihydroxy-5-(methylsulfanyl)pent-1-en-3-one + O2 = 3-(methylsulfanyl)propanoate + CO + formate + 2 H(+). It carries out the reaction 1,2-dihydroxy-5-(methylsulfanyl)pent-1-en-3-one + O2 = 4-methylsulfanyl-2-oxobutanoate + formate + 2 H(+). It functions in the pathway amino-acid biosynthesis; L-methionine biosynthesis via salvage pathway; L-methionine from S-methyl-5-thio-alpha-D-ribose 1-phosphate: step 5/6. In terms of biological role, catalyzes 2 different reactions between oxygen and the acireductone 1,2-dihydroxy-3-keto-5-methylthiopentene (DHK-MTPene) depending upon the metal bound in the active site. Fe-containing acireductone dioxygenase (Fe-ARD) produces formate and 2-keto-4-methylthiobutyrate (KMTB), the alpha-ketoacid precursor of methionine in the methionine recycle pathway. Ni-containing acireductone dioxygenase (Ni-ARD) produces methylthiopropionate, carbon monoxide and formate, and does not lie on the methionine recycle pathway. The protein is Acireductone dioxygenase of Picosynechococcus sp. (strain ATCC 27264 / PCC 7002 / PR-6) (Agmenellum quadruplicatum).